A 159-amino-acid polypeptide reads, in one-letter code: Immunogenic protein MPB63 (159 aa).

The first 29 residues, 1–29 (MKLTTMIKTAVAVVAMAAIATFAAPVALA), serve as a signal peptide directing secretion.

It localises to the secreted. This chain is Immunogenic protein MPB63 (mpb63), found in Mycobacterium bovis (strain ATCC BAA-935 / AF2122/97).